The following is a 201-amino-acid chain: Small ribosomal subunit protein uS4 (201 aa).

Residues 91 to 157 enclose the S4 RNA-binding domain; it reads SRLDNVVYRA…LPFQVARETV (67 aa).

This sequence belongs to the universal ribosomal protein uS4 family. As to quaternary structure, part of the 30S ribosomal subunit. Contacts protein S5. The interaction surface between S4 and S5 is involved in control of translational fidelity.

Its function is as follows. One of the primary rRNA binding proteins, it binds directly to 16S rRNA where it nucleates assembly of the body of the 30S subunit. With S5 and S12 plays an important role in translational accuracy. The protein is Small ribosomal subunit protein uS4 of Rhodococcus erythropolis (strain PR4 / NBRC 100887).